Here is a 261-residue protein sequence, read N- to C-terminus: uncharacterized protein (261 aa).

Residues 7-122 (TAVLADDEPL…RLASCCEKLQ (116 aa)) form the Response regulatory domain. Asp-54 is subject to 4-aspartylphosphate. Residues 157–261 (LKASKGEEIH…RALQHLFKVS (105 aa)) enclose the HTH LytTR-type domain.

This is an uncharacterized protein from Vibrio cholerae serotype O1 (strain ATCC 39315 / El Tor Inaba N16961).